The sequence spans 486 residues: Cardiolipin synthase A (486 aa).

A run of 2 helical transmembrane segments spans residues 3-23 (IFYD…IANI) and 38-58 (MSWL…WFFF). 2 consecutive PLD phosphodiesterase domains span residues 219–246 (LDVR…VDPY) and 399–426 (KKGL…DMRS). Catalysis depends on residues His-224, Lys-226, Asp-231, His-404, Lys-406, and Asp-411.

This sequence belongs to the phospholipase D family. Cardiolipin synthase subfamily. ClsA sub-subfamily.

The protein localises to the cell inner membrane. The catalysed reaction is 2 a 1,2-diacyl-sn-glycero-3-phospho-(1'-sn-glycerol) = a cardiolipin + glycerol. Catalyzes the reversible phosphatidyl group transfer from one phosphatidylglycerol molecule to another to form cardiolipin (CL) (diphosphatidylglycerol) and glycerol. The polypeptide is Cardiolipin synthase A (Buchnera aphidicola subsp. Schizaphis graminum (strain Sg)).